Here is a 61-residue protein sequence, read N- to C-terminus: Probable tautomerase LL0574 (61 aa).

Catalysis depends on Pro-2, which acts as the Proton acceptor; via imino nitrogen.

The protein belongs to the 4-oxalocrotonate tautomerase family.

This chain is Probable tautomerase LL0574, found in Lactococcus lactis subsp. lactis (strain IL1403) (Streptococcus lactis).